The primary structure comprises 865 residues: MIKAIIGKIIGTRNDRWIKQYKKKVLAINALEPTYEKMSDDELQNAFEELKKRVRSVEKDLQEKTLLEVLPESFAITREASKRILKMRHFDVQLIGGMVLNDGKIAEMKTGEGKTLVATLAVALNALKGESVYVVTVNDYLAHRDSKEMEPLYHFLGYSVGTITASVRDDDERLEIYSKDIVYGTNNEFGFDYLRDNMKYSLEHKVQKSHAFAIVDEVDSILIDEARTPLIISGPVDRRMENYNKADEVAKSMQVEIDFTIDEKNRTILITEEGIKKAENLFGVDNLYKIENAALSHHLDQALKANYLFFIDKDYIVANNEVVIVDEFTGRLSEGRRFSEGLHQALEAKEGVSIKEESQTLADITFQNYFRMFSKLAGMTGTAQTEATEFLEIYNLEVVSIPTNLAIKRKDLNDLIYKSEKEKFDAVILKIKELHDKGQPVLVGTASIEKSETLHALLKKERIPHTVLNAKQHTKEAEIIKDAGLKGAVTIATNMAGRGVDIKLTDEIKELGGLYIIGTERHESRRIDNQLRGRSGRQGDPGTSQFYLSLEDNLLRIFGSDRIKGVMEKLGLKDGEHIESKLVTRAVENAQKKVENLHFESRKHLLEYDDVANEQRKSVYKFRDELLDVNYDISAKIAENREYALNQIFSKLKAFDHQNLSEEELLGLKNILKEDFNAHVGLEDLKKASPIENFIAEKLKSDYENKMKVLDSEQRSRIERIVYLQILDNAWREHLYTMDNLKTGINLRGYNQKDPLVEYKKESYNLFLELIEDIKMEAIKTFSKIQFEDEQDSSDAERYLDNFSEEREHESVTYRHEEALDEDLNVAMKAFAKTPKRNEPCPCGSGKKYKDCCAKSGPKKGLFAK.

Residues Gln-93, 111–115 (GEGKT), and Asp-501 each bind ATP. Residues Cys-841, Cys-843, Cys-852, and Cys-853 each contribute to the Zn(2+) site.

The protein belongs to the SecA family. In terms of assembly, monomer and homodimer. Part of the essential Sec protein translocation apparatus which comprises SecA, SecYEG and auxiliary proteins SecDF-YajC and YidC. Requires Zn(2+) as cofactor.

It is found in the cell inner membrane. It localises to the cytoplasm. The enzyme catalyses ATP + H2O + cellular proteinSide 1 = ADP + phosphate + cellular proteinSide 2.. Functionally, part of the Sec protein translocase complex. Interacts with the SecYEG preprotein conducting channel. Has a central role in coupling the hydrolysis of ATP to the transfer of proteins into and across the cell membrane, serving as an ATP-driven molecular motor driving the stepwise translocation of polypeptide chains across the membrane. The polypeptide is Protein translocase subunit SecA (Helicobacter pylori (strain Shi470)).